The following is a 105-amino-acid chain: Large ribosomal subunit protein uL24 (105 aa).

Belongs to the universal ribosomal protein uL24 family. In terms of assembly, part of the 50S ribosomal subunit.

Functionally, one of two assembly initiator proteins, it binds directly to the 5'-end of the 23S rRNA, where it nucleates assembly of the 50S subunit. Its function is as follows. One of the proteins that surrounds the polypeptide exit tunnel on the outside of the subunit. The protein is Large ribosomal subunit protein uL24 of Xylella fastidiosa (strain M23).